The chain runs to 431 residues: tRNA(Ile)-lysidine synthase (431 aa).

19-24 lines the ATP pocket; sequence STGIDS.

Belongs to the tRNA(Ile)-lysidine synthase family.

The protein resides in the cytoplasm. It catalyses the reaction cytidine(34) in tRNA(Ile2) + L-lysine + ATP = lysidine(34) in tRNA(Ile2) + AMP + diphosphate + H(+). In terms of biological role, ligates lysine onto the cytidine present at position 34 of the AUA codon-specific tRNA(Ile) that contains the anticodon CAU, in an ATP-dependent manner. Cytidine is converted to lysidine, thus changing the amino acid specificity of the tRNA from methionine to isoleucine. The polypeptide is tRNA(Ile)-lysidine synthase (Staphylococcus aureus (strain Mu50 / ATCC 700699)).